A 203-amino-acid chain; its full sequence is Urease accessory protein UreG (203 aa).

Glycine 11 to threonine 18 serves as a coordination point for GTP.

The protein belongs to the SIMIBI class G3E GTPase family. UreG subfamily. In terms of assembly, homodimer. UreD, UreF and UreG form a complex that acts as a GTP-hydrolysis-dependent molecular chaperone, activating the urease apoprotein by helping to assemble the nickel containing metallocenter of UreC. The UreE protein probably delivers the nickel.

It localises to the cytoplasm. Facilitates the functional incorporation of the urease nickel metallocenter. This process requires GTP hydrolysis, probably effectuated by UreG. This chain is Urease accessory protein UreG, found in Prochlorococcus marinus (strain MIT 9215).